The chain runs to 129 residues: Glycine cleavage system H protein (129 aa).

In terms of domain architecture, Lipoyl-binding spans 24–106 (TYTVGITEHA…YAGGWIFKIK (83 aa)). K65 is subject to N6-lipoyllysine.

Belongs to the GcvH family. In terms of assembly, the glycine cleavage system is composed of four proteins: P, T, L and H. (R)-lipoate serves as cofactor.

In terms of biological role, the glycine cleavage system catalyzes the degradation of glycine. The H protein shuttles the methylamine group of glycine from the P protein to the T protein. The chain is Glycine cleavage system H protein from Escherichia fergusonii (strain ATCC 35469 / DSM 13698 / CCUG 18766 / IAM 14443 / JCM 21226 / LMG 7866 / NBRC 102419 / NCTC 12128 / CDC 0568-73).